Reading from the N-terminus, the 287-residue chain is Putative ABC transporter ATP-binding protein MM_1038 (287 aa).

The ABC transporter domain maps to 5-238 (LENISVFYSR…ENVPLPPVAS (234 aa)). 40 to 47 (GEKGAGKS) provides a ligand contact to ATP.

The protein belongs to the ABC transporter superfamily.

It localises to the cell membrane. Probably part of an ABC transporter complex. Responsible for energy coupling to the transport system. This Methanosarcina mazei (strain ATCC BAA-159 / DSM 3647 / Goe1 / Go1 / JCM 11833 / OCM 88) (Methanosarcina frisia) protein is Putative ABC transporter ATP-binding protein MM_1038.